We begin with the raw amino-acid sequence, 389 residues long: 26S proteasome regulatory subunit 10B (389 aa).

At K72 the chain carries N6-acetyllysine. Residue 174 to 181 (GPPGTGKT) coordinates ATP. K206 carries the post-translational modification N6-acetyllysine. Position 244 is a phosphoserine (S244).

This sequence belongs to the AAA ATPase family. Component of the 19S proteasome regulatory particle complex. The 26S proteasome consists of a 20S core particle (CP) and two 19S regulatory subunits (RP). The regulatory particle is made of a lid composed of 9 subunits, a base containing 6 ATPases including PSMC6 and few additional components. Interacts with PAAF1.

It localises to the cytoplasm. The protein resides in the nucleus. Functionally, component of the 26S proteasome, a multiprotein complex involved in the ATP-dependent degradation of ubiquitinated proteins. This complex plays a key role in the maintenance of protein homeostasis by removing misfolded or damaged proteins, which could impair cellular functions, and by removing proteins whose functions are no longer required. Therefore, the proteasome participates in numerous cellular processes, including cell cycle progression, apoptosis, or DNA damage repair. PSMC6 belongs to the heterohexameric ring of AAA (ATPases associated with diverse cellular activities) proteins that unfolds ubiquitinated target proteins that are concurrently translocated into a proteolytic chamber and degraded into peptides. This is 26S proteasome regulatory subunit 10B (PSMC6) from Bos taurus (Bovine).